Reading from the N-terminus, the 472-residue chain is MPKTQSAAGYKAGVKDYKLTYYTPDYTPKDTDLLAAFRFSPQPGVPADEAGAAIAAESSTGTWTTVWTDLLTDMDRYKGKCYHIEPVQGEENSYFAFIAYPLDLFEEGSVTNILTSIVGNVFGFKAIRSLRLEDIRFPVALVKTFQGPPHGIQVERDLLNKYGRPMLGCTIKPKLGLSAKNYGRAVYECLRGGLDFTKDDENINSQPFQRWRDRFLFVADAIHKSQAETGEIKGHYLNVTAPTCEEMMKRAEFAKELGMPIIMHDFLTAGFTANTTLAKWCRDNGVLLHIHRAMHAVIDRQRNHGIHFRVLAKCLRLSGGDHLHSGTVVGKLEGDKASTLGFVDLMREDHIEADRSRGVFFTQDWASMPGVLPVASGGIHVWHMPALVEIFGDDSVLQFGGGTLGHPWGNAPGATANRVALEACVQARNEGRDLYREGGDILREAGKWSPELAAALDLWKEIKFEFETMDKL.

Residues N120 and T170 each coordinate substrate. The active-site Proton acceptor is the K172. K174 contributes to the substrate binding site. Mg(2+)-binding residues include K198, D200, and E201. K198 is modified (N6-carboxylysine). Catalysis depends on H291, which acts as the Proton acceptor. 3 residues coordinate substrate: R292, H324, and S376. Residues 461–467 (EIKFEFE) carry the Interacts with RbcX2 motif.

This sequence belongs to the RuBisCO large chain family. Type I subfamily. In terms of assembly, heterohexadecamer of 8 large chains and 8 small chains; disulfide-linked. The disulfide link is formed within the large subunit homodimers. The exposed C-terminus binds in a cleft in the RbcX2 (shown with endogenous and Anabaena strain CA protein). RbcX2 is displaced by RbcS; as RbcX2 is removed RbcS mediates the ordering of an internal RbcL loop (Thr-64-Leu-70) in a catalytically active conformation. Mg(2+) is required as a cofactor. In terms of processing, the disulfide bond which can form in the large chain dimeric partners within the hexadecamer appears to be associated with oxidative stress and protein turnover.

It is found in the carboxysome. It catalyses the reaction 2 (2R)-3-phosphoglycerate + 2 H(+) = D-ribulose 1,5-bisphosphate + CO2 + H2O. The enzyme catalyses D-ribulose 1,5-bisphosphate + O2 = 2-phosphoglycolate + (2R)-3-phosphoglycerate + 2 H(+). In terms of biological role, ruBisCO catalyzes two reactions: the carboxylation of D-ribulose 1,5-bisphosphate, the primary event in carbon dioxide fixation, as well as the oxidative fragmentation of the pentose substrate in the photorespiration process. Both reactions occur simultaneously and in competition at the same active site. The polypeptide is Ribulose bisphosphate carboxylase large chain (cbbL) (Synechococcus sp. (strain ATCC 27144 / PCC 6301 / SAUG 1402/1) (Anacystis nidulans)).